The primary structure comprises 209 residues: Large ribosomal subunit protein uL3 (209 aa).

The tract at residues 141-163 (RAVGSMGASSDPSRTFKNKRMPG) is disordered.

The protein belongs to the universal ribosomal protein uL3 family. Part of the 50S ribosomal subunit. Forms a cluster with proteins L14 and L19.

One of the primary rRNA binding proteins, it binds directly near the 3'-end of the 23S rRNA, where it nucleates assembly of the 50S subunit. The polypeptide is Large ribosomal subunit protein uL3 (Clostridium botulinum (strain ATCC 19397 / Type A)).